The sequence spans 421 residues: DUF724 domain-containing protein 8 (421 aa).

Composition is skewed to polar residues over residues 149–165 and 199–213; these read TQGSGDKTGDSVRNANE and PRNQNGSGNDSTLEN. The tract at residues 149-229 is disordered; that stretch reads TQGSGDKTGD…NRKRKREENL (81 aa). Residues 246–420 enclose the DUF724 domain; sequence VLPFEKKLRI…LEFLATASAP (175 aa). Residues 361 to 397 adopt a coiled-coil conformation; that stretch reads EKVTAEKESVKAENKRKILELQRLNEEMDKEIAQSKS.

Expressed in leaves and flowers, and at lower levels in roots, stems and siliques.

It is found in the nucleus. In terms of biological role, may be involved in the polar growth of plant cells via transportation of RNAs. This chain is DUF724 domain-containing protein 8, found in Arabidopsis thaliana (Mouse-ear cress).